Consider the following 476-residue polypeptide: Glycogen synthase (476 aa).

ADP-alpha-D-glucose is bound at residue Lys15.

It belongs to the glycosyltransferase 1 family. Bacterial/plant glycogen synthase subfamily.

The catalysed reaction is [(1-&gt;4)-alpha-D-glucosyl](n) + ADP-alpha-D-glucose = [(1-&gt;4)-alpha-D-glucosyl](n+1) + ADP + H(+). Its pathway is glycan biosynthesis; glycogen biosynthesis. Its function is as follows. Synthesizes alpha-1,4-glucan chains using ADP-glucose. The protein is Glycogen synthase of Halalkalibacterium halodurans (strain ATCC BAA-125 / DSM 18197 / FERM 7344 / JCM 9153 / C-125) (Bacillus halodurans).